Here is a 397-residue protein sequence, read N- to C-terminus: MTLLNPFFGEFGGMYVPQILIPALLQLEKAFVDAKDDPAFIAEFQTLLTEYAGRPTPLTLTRNLTKGTKTRLYLKREDLLHGGAHKTNQVLGQALLAKRMGKSEIIAETGAGQHGVATALACALLGLKCRVYMGAKDCERQKPNVFRMKLMGATVIPVHSGSSTLKDACNEALRDWAANYESAHYLLGTAAGPHPFPTIVREFQKMIGEEAKAQCFEKEERLPDAVIACVGGGSNAIGMFADFIDEPSVRLIGVEPGGHGIESGEHGAPLGHGSKGVFFGMHSYLMQDTQGQIQESYSVSAGLDFPSVGPQHAHLAAIGRAEYPSVTDKEALDAFQELAKSEGIIPALESSHALAHALKMARSEPEKEQVLIVNLSGRGDKDIFTVADIFEKEGTLS.

The residue at position 86 (lysine 86) is an N6-(pyridoxal phosphate)lysine.

This sequence belongs to the TrpB family. In terms of assembly, tetramer of two alpha and two beta chains. The cofactor is pyridoxal 5'-phosphate.

The enzyme catalyses (1S,2R)-1-C-(indol-3-yl)glycerol 3-phosphate + L-serine = D-glyceraldehyde 3-phosphate + L-tryptophan + H2O. The protein operates within amino-acid biosynthesis; L-tryptophan biosynthesis; L-tryptophan from chorismate: step 5/5. Functionally, the beta subunit is responsible for the synthesis of L-tryptophan from indole and L-serine. This Aeromonas hydrophila subsp. hydrophila (strain ATCC 7966 / DSM 30187 / BCRC 13018 / CCUG 14551 / JCM 1027 / KCTC 2358 / NCIMB 9240 / NCTC 8049) protein is Tryptophan synthase beta chain.